Reading from the N-terminus, the 327-residue chain is Sideroflexin-2 (327 aa).

Helical transmembrane passes span 99–119 (GMLI…VVLW), 143–163 (VTQL…AAIG), 175–195 (LFQR…NIPL), 228–248 (EVVV…PLIM), and 267–287 (FQTL…CALF).

The protein belongs to the sideroflexin family.

It is found in the mitochondrion membrane. It catalyses the reaction L-serine(in) = L-serine(out). Functionally, mitochondrial amino-acid transporter that mediates transport of serine into mitochondria. The polypeptide is Sideroflexin-2 (Drosophila melanogaster (Fruit fly)).